The primary structure comprises 103 residues: Small ribosomal subunit protein uS14c (103 aa).

A disordered region spans residues 34–56 (KVSPLSLSEKTKMREKLQSLPRN).

The protein belongs to the universal ribosomal protein uS14 family. Part of the 30S ribosomal subunit.

Its subcellular location is the plastid. It localises to the chloroplast. Binds 16S rRNA, required for the assembly of 30S particles. This chain is Small ribosomal subunit protein uS14c, found in Brachypodium distachyon (Purple false brome).